Consider the following 250-residue polypeptide: 5'-nucleotidase SurE (250 aa).

A divalent metal cation contacts are provided by D8, D9, S40, and N94.

It belongs to the SurE nucleotidase family. A divalent metal cation is required as a cofactor.

Its subcellular location is the cytoplasm. The catalysed reaction is a ribonucleoside 5'-phosphate + H2O = a ribonucleoside + phosphate. Its function is as follows. Nucleotidase that shows phosphatase activity on nucleoside 5'-monophosphates. In Wolbachia sp. subsp. Brugia malayi (strain TRS), this protein is 5'-nucleotidase SurE.